The sequence spans 379 residues: Chaperone protein DnaJ (379 aa).

The J domain occupies 5–69; it reads DYYEVLGISK…NKRASYDQFG (65 aa). The CR-type zinc finger occupies 136-218; the sequence is GTTKEISIRK…CHGKGTENKT (83 aa). Residues C149, C152, C166, C169, C192, C195, C206, and C209 each contribute to the Zn(2+) site. CXXCXGXG motif repeat units lie at residues 149 to 156, 166 to 173, 192 to 199, and 206 to 213; these read CETCHGDG, CSYCNGAG, CPKCNGSG, and CPTCHGKG.

It belongs to the DnaJ family. In terms of assembly, homodimer. It depends on Zn(2+) as a cofactor.

It is found in the cytoplasm. Participates actively in the response to hyperosmotic and heat shock by preventing the aggregation of stress-denatured proteins and by disaggregating proteins, also in an autonomous, DnaK-independent fashion. Unfolded proteins bind initially to DnaJ; upon interaction with the DnaJ-bound protein, DnaK hydrolyzes its bound ATP, resulting in the formation of a stable complex. GrpE releases ADP from DnaK; ATP binding to DnaK triggers the release of the substrate protein, thus completing the reaction cycle. Several rounds of ATP-dependent interactions between DnaJ, DnaK and GrpE are required for fully efficient folding. Also involved, together with DnaK and GrpE, in the DNA replication of plasmids through activation of initiation proteins. This is Chaperone protein DnaJ from Staphylococcus aureus (strain USA300 / TCH1516).